A 1890-amino-acid chain; its full sequence is Proteasome-associated protein ECM29 homolog (1890 aa).

18 HEAT repeats span residues 6–29 (NAEI…EKLE), 30–67 (AAVG…RLSS), 130–167 (DKLF…ICAN), 226–263 (FSDL…MLDF), 294–330 (RVRQ…TNTN), 334–354 (KVLA…ELVS), 355–395 (KVSK…SFPQ), 459–496 (GQQH…EYYA), 498–523 (ARYL…LYGT), 524–561 (SKKD…EQRR), 565–602 (PSFQ…SLEV), 685–722 (AKQL…FGLS), 776–813 (PQFV…AVEI), 843–882 (STKL…GDGE), 938–975 (DDFD…HCSQ), 980–1018 (LAKK…ISDS), 1118–1155 (PYLG…DSKE), and 1159–1196 (RYYW…RPNG). Position 1213 is a phosphoserine (S1213). HEAT repeat units follow at residues 1271–1309 (AVAS…SSGS), 1313–1350 (PHLA…AQEA), 1378–1415 (SVLE…IRLG), 1416–1457 (KEMT…LAKE), 1497–1534 (DYMD…DVSP), 1541–1578 (LNLN…RLSS), 1583–1620 (PDRL…GLDR), and 1623–1660 (QICS…QLEA). The segment at 1680 to 1702 (RKESDDEDEPNTSQELSADERNK) is disordered. S1683 bears the Phosphoserine mark. T1691 is subject to Phosphothreonine. Residue S1692 is modified to Phosphoserine. HEAT repeat units follow at residues 1751-1788 (PVQV…EKKI) and 1826-1863 (KEAL…NLEK).

As to quaternary structure, associated with the proteasome.

Its subcellular location is the cytoplasm. The chain is Proteasome-associated protein ECM29 homolog from Drosophila melanogaster (Fruit fly).